Reading from the N-terminus, the 116-residue chain is Protein Rev (116 aa).

A phosphoserine; by host CK2 mark is found at Ser-5 and Ser-8. The homomultimerization stretch occupies residues 18–26 (CIKILYQSN). The segment at 27-47 (PYPKPEGTRQARRNRRRRWRA) is disordered. A Nuclear localization signal and RNA-binding (RRE) motif is present at residues 34-50 (TRQARRNRRRRWRARQR). Basic residues predominate over residues 36–47 (QARRNRRRRWRA). The Nuclear export signal and binding to XPO1 motif lies at 73–84 (LQLPPLERLHIN). The tract at residues 87–116 (EDCGQGPEEGVGSSQISGESHAVLESGTKE) is disordered. Ser-99 is modified (phosphoserine; by host).

It belongs to the HIV-1 REV protein family. Homomultimer; when bound to the RRE. Multimeric assembly is essential for activity and may involve XPO1. Binds to human KPNB1, XPO1, TNPO1, RANBP5 and IPO7. Interacts with the viral Integrase. Interacts with human KHDRBS1. Interacts with human NAP1; this interaction decreases Rev multimerization and stimulates its activity. Interacts with human DEAD-box helicases DDX3 and DDX24; these interactions may serve for viral RNA export to the cytoplasm and packaging, respectively. Interacts with human PSIP1; this interaction may inhibit HIV-1 DNA integration by promoting dissociation of the Integrase-LEDGF/p75 complex. Post-translationally, asymmetrically arginine dimethylated at one site by host PRMT6. Methylation impairs the RNA-binding activity and export of viral RNA from the nucleus to the cytoplasm. In terms of processing, phosphorylated by protein kinase CK2. Presence of, and maybe binding to the N-terminus of the regulatory beta subunit of CK2 is necessary for CK2-mediated Rev's phosphorylation.

The protein localises to the host nucleus. Its subcellular location is the host nucleolus. The protein resides in the host cytoplasm. Its function is as follows. Escorts unspliced or incompletely spliced viral pre-mRNAs (late transcripts) out of the nucleus of infected cells. These pre-mRNAs carry a recognition sequence called Rev responsive element (RRE) located in the env gene, that is not present in fully spliced viral mRNAs (early transcripts). This function is essential since most viral proteins are translated from unspliced or partially spliced pre-mRNAs which cannot exit the nucleus by the pathway used by fully processed cellular mRNAs. Rev itself is translated from a fully spliced mRNA that readily exits the nucleus. Rev's nuclear localization signal (NLS) binds directly to KPNB1/Importin beta-1 without previous binding to KPNA1/Importin alpha-1. KPNB1 binds to the GDP bound form of RAN (Ran-GDP) and targets Rev to the nucleus. In the nucleus, the conversion from Ran-GDP to Ran-GTP dissociates Rev from KPNB1 and allows Rev's binding to the RRE in viral pre-mRNAs. Rev multimerization on the RRE via cooperative assembly exposes its nuclear export signal (NES) to the surface. Rev can then form a complex with XPO1/CRM1 and Ran-GTP, leading to nuclear export of the complex. Conversion from Ran-GTP to Ran-GDP mediates dissociation of the Rev/RRE/XPO1/RAN complex, so that Rev can return to the nucleus for a subsequent round of export. Beside KPNB1, also seems to interact with TNPO1/Transportin-1, RANBP5/IPO5 and IPO7/RANBP7 for nuclear import. The nucleoporin-like HRB/RIP is an essential cofactor that probably indirectly interacts with Rev to release HIV RNAs from the perinuclear region to the cytoplasm. In Human immunodeficiency virus type 1 group M subtype F1 (isolate VI850) (HIV-1), this protein is Protein Rev.